The sequence spans 437 residues: Transcription factor AP-2-alpha (437 aa).

Lys10 is covalently cross-linked (Glycyl lysine isopeptide (Lys-Gly) (interchain with G-Cter in SUMO); alternate). A Glycyl lysine isopeptide (Lys-Gly) (interchain with G-Cter in SUMO2); alternate cross-link involves residue Lys10. The disordered stretch occupies residues 14–107 (CEDRHDGASN…GQRQSQESGL (94 aa)). A PPxY motif motif is present at residues 57–62 (YFPPPY). Low complexity-rich tracts occupy residues 65-74 (IYPQSQDPYS) and 88-101 (QPQPQHPGWPGQRQ). Residues Lys177 and Lys184 each participate in a glycyl lysine isopeptide (Lys-Gly) (interchain with G-Cter in SUMO2) cross-link. Phosphoserine; by PKA is present on Ser239. Positions 280–410 (RRKAANVTLL…YLTEALKAMD (131 aa)) are H-S-H (helix-span-helix), dimerization. Positions 414 to 427 (LSNNPNSHTDNNAK) are enriched in polar residues. The interval 414 to 437 (LSNNPNSHTDNNAKSSDKEEKHRK) is disordered. A compositionally biased stretch (basic and acidic residues) spans 428–437 (SSDKEEKHRK).

This sequence belongs to the AP-2 family. Binds DNA as a dimer. Can form homodimers or heterodimers with other AP-2 family members. Interacts with WWOX. Interacts with CITED4. Interacts with UBE2I. Interacts with RALBP1 in a complex also containing EPN1 and NUMB during interphase and mitosis. Interacts with KCTD1; this interaction represses transcription activation. Interacts (via C-terminus) with CITED2 (via C-terminus); the interaction stimulates TFAP2A-transcriptional activation. Interacts (via N-terminus) with EP300 (via N-terminus); the interaction requires CITED2. Interacts with KCTD15; this interaction inhibits TFAP2A transcriptional activation. Post-translationally, sumoylated on Lys-10; which inhibits transcriptional activity.

The protein localises to the nucleus. Its function is as follows. Sequence-specific DNA-binding protein that interacts with inducible viral and cellular enhancer elements to regulate transcription of selected genes. AP-2 factors bind to the consensus sequence 5'-GCCNNNGGC-3' and activate genes involved in a large spectrum of important biological functions including proper eye, face, body wall, limb and neural tube development. They also suppress a number of genes including MCAM/MUC18, C/EBP alpha and MYC. AP-2-alpha is the only AP-2 protein required for early morphogenesis of the lens vesicle. Together with the CITED2 coactivator, stimulates the PITX2 P1 promoter transcription activation. Associates with chromatin to the PITX2 P1 promoter region. In Bos taurus (Bovine), this protein is Transcription factor AP-2-alpha (TFAP2A).